The chain runs to 467 residues: Uronate isomerase (467 aa).

The protein belongs to the metallo-dependent hydrolases superfamily. Uronate isomerase family.

The enzyme catalyses D-glucuronate = D-fructuronate. It catalyses the reaction aldehydo-D-galacturonate = keto-D-tagaturonate. It functions in the pathway carbohydrate metabolism; pentose and glucuronate interconversion. In Solibacter usitatus (strain Ellin6076), this protein is Uronate isomerase.